Consider the following 355-residue polypeptide: Zinc transporter ZIP13 homolog (355 aa).

Asparagine 4 carries N-linked (GlcNAc...) asparagine glycosylation. 3 helical membrane passes run 37–57 (VFSL…LIII), 79–99 (VLLS…LLPE), and 118–138 (LWVL…SGYA). The N-linked (GlcNAc...) asparagine glycan is linked to asparagine 218. 2 helical membrane passes run 273–293 (LLTA…SGVT) and 301–321 (SWIM…TVLP).

It belongs to the ZIP transporter (TC 2.A.5) family. KE4/Catsup subfamily.

The protein localises to the basolateral cell membrane. Its subcellular location is the golgi apparatus membrane. Involved in zinc transport and homeostasis. The protein is Zinc transporter ZIP13 homolog (Zip99C) of Drosophila melanogaster (Fruit fly).